Here is a 367-residue protein sequence, read N- to C-terminus: UDP-N-acetylglucosamine--N-acetylmuramyl-(pentapeptide) pyrophosphoryl-undecaprenol N-acetylglucosamine transferase (367 aa).

UDP-N-acetyl-alpha-D-glucosamine is bound by residues 18–20 (TGG), N130, R170, S196, I252, 271–276 (ALTVSE), and Q297.

Belongs to the glycosyltransferase 28 family. MurG subfamily.

The protein resides in the cell inner membrane. It catalyses the reaction di-trans,octa-cis-undecaprenyl diphospho-N-acetyl-alpha-D-muramoyl-L-alanyl-D-glutamyl-meso-2,6-diaminopimeloyl-D-alanyl-D-alanine + UDP-N-acetyl-alpha-D-glucosamine = di-trans,octa-cis-undecaprenyl diphospho-[N-acetyl-alpha-D-glucosaminyl-(1-&gt;4)]-N-acetyl-alpha-D-muramoyl-L-alanyl-D-glutamyl-meso-2,6-diaminopimeloyl-D-alanyl-D-alanine + UDP + H(+). Its pathway is cell wall biogenesis; peptidoglycan biosynthesis. Cell wall formation. Catalyzes the transfer of a GlcNAc subunit on undecaprenyl-pyrophosphoryl-MurNAc-pentapeptide (lipid intermediate I) to form undecaprenyl-pyrophosphoryl-MurNAc-(pentapeptide)GlcNAc (lipid intermediate II). The chain is UDP-N-acetylglucosamine--N-acetylmuramyl-(pentapeptide) pyrophosphoryl-undecaprenol N-acetylglucosamine transferase from Shewanella frigidimarina (strain NCIMB 400).